Reading from the N-terminus, the 671-residue chain is DNA ligase (671 aa).

NAD(+)-binding positions include 32 to 36, 81 to 82, and glutamate 113; these read DVEYD and SL. Lysine 115 functions as the N6-AMP-lysine intermediate in the catalytic mechanism. Residues arginine 136, glutamate 173, lysine 290, and lysine 314 each coordinate NAD(+). The Zn(2+) site is built by cysteine 408, cysteine 411, cysteine 426, and cysteine 432. In terms of domain architecture, BRCT spans 593 to 671; it reads EIDSPFAGKT…EAEMLRLLGS (79 aa).

The protein belongs to the NAD-dependent DNA ligase family. LigA subfamily. Mg(2+) is required as a cofactor. Requires Mn(2+) as cofactor.

It carries out the reaction NAD(+) + (deoxyribonucleotide)n-3'-hydroxyl + 5'-phospho-(deoxyribonucleotide)m = (deoxyribonucleotide)n+m + AMP + beta-nicotinamide D-nucleotide.. Its function is as follows. DNA ligase that catalyzes the formation of phosphodiester linkages between 5'-phosphoryl and 3'-hydroxyl groups in double-stranded DNA using NAD as a coenzyme and as the energy source for the reaction. It is essential for DNA replication and repair of damaged DNA. The chain is DNA ligase from Escherichia coli O17:K52:H18 (strain UMN026 / ExPEC).